Reading from the N-terminus, the 189-residue chain is Protein seele (189 aa).

The first 17 residues, 1–17 (MLTKALILFGLLALAQG), serve as a signal peptide directing secretion. In terms of domain architecture, Saposin B-type spans 23–176 (REVKCHVCKA…EQASYCDESP (154 aa)). 3 disulfide bridges follow: Cys27/Cys172, Cys30/Cys165, and Cys85/Cys136. A Prevents secretion from ER motif is present at residues 186 to 189 (KEEL).

The protein belongs to the canopy family.

Its subcellular location is the endoplasmic reticulum. In terms of biological role, involved in embryonic dorsal-ventral patterning which is generated by a series of serine protease processing events where gd processes snk which cleaves ea which then processes spz into the activating ligand for the Toll receptor. Required during this process for the secretion of ea from the developing embryo into the perivitelline space and for ea processing. In Drosophila melanogaster (Fruit fly), this protein is Protein seele.